Reading from the N-terminus, the 79-residue chain is UPF0337 protein YhjA (79 aa).

The disordered stretch occupies residues 1-30; sequence MALNDKLDATKDKVSGKVKETTGKVTGDEK.

The protein belongs to the UPF0337 (CsbD) family.

The sequence is that of UPF0337 protein YhjA (yhjA) from Lactococcus lactis subsp. lactis (strain IL1403) (Streptococcus lactis).